The sequence spans 78 residues: Small ribosomal subunit protein bS21A (78 aa).

The span at 30–52 shows a compositional bias: basic and acidic residues; the sequence is MKARSAYEKPSEKRAREKGEAVR. Positions 30–78 are disordered; the sequence is MKARSAYEKPSEKRAREKGEAVRRQRKLARKKLQREGLLPAPKKAVRAR. The segment covering 53–62 has biased composition (basic residues); that stretch reads RQRKLARKKL.

This sequence belongs to the bacterial ribosomal protein bS21 family.

The protein is Small ribosomal subunit protein bS21A of Rhizobium etli (strain ATCC 51251 / DSM 11541 / JCM 21823 / NBRC 15573 / CFN 42).